The primary structure comprises 107 residues: High mobility group protein HMG-I/HMG-Y (107 aa).

Over residues 1–13 the composition is skewed to polar residues; sequence MSESGSKSSQPLA. Residues 1-107 form a disordered region; sequence MSESGSKSSQ…ISQESSEEEQ (107 aa). An N-acetylserine modification is found at Ser2. Position 7 is an N6-acetyllysine (Lys7). Residue Ser8 is modified to ADP-ribosylserine. Position 9 is an ADP-ribosylserine; alternate (Ser9). Ser9 carries the post-translational modification Phosphoserine; alternate. Position 15 is an N6-acetyllysine; alternate (Lys15). Residue Lys15 forms a Glycyl lysine isopeptide (Lys-Gly) (interchain with G-Cter in SUMO2); alternate linkage. The segment covering 15–24 has biased composition (basic and acidic residues); the sequence is KQEKDGTEKR. A DNA-binding region (a.T hook 1) is located at residues 21–31; the sequence is TEKRGRGRPRK. Arg26 bears the Asymmetric dimethylarginine; alternate mark. Arg26 is modified (omega-N-methylarginine; alternate). Arg26 carries the post-translational modification Symmetric dimethylarginine; alternate. Residue Ser36 is modified to Phosphoserine; by HIPK2 and CDC2. A Phosphothreonine modification is found at Thr39. Phosphoserine occurs at positions 44 and 49. Thr53 bears the Phosphothreonine; by HIPK2 and CDC2 mark. 2 consecutive DNA-binding regions (a.T hook) follow at residues 53-63 and 78-89; these read TPKRPRGRPKG and APGRKPRGRPKK. The interval 53 to 77 is interaction with HIPK2; it reads TPKRPRGRPKGSKNKGAAKTRKVTT. Residues 55–74 show a composition bias toward basic residues; that stretch reads KRPRGRPKGSKNKGAAKTRK. Residues Arg58 and Arg60 each carry the asymmetric dimethylarginine; by PRMT6; alternate modification. Arg58 and Arg60 each carry omega-N-methylarginine; by PRMT6; alternate. The span at 93–107 shows a compositional bias: acidic residues; sequence EEEEGISQESSEEEQ. A phosphoserine mark is found at Ser99, Ser102, and Ser103.

The protein belongs to the HMGA family. In terms of assembly, interacts with HIPK2. Post-translationally, isoforms HMG-I and HMG-Y can be phosphorylated by HIPK2. Phosphorylation may modulate DNA-binding affinity. In terms of processing, methylation at Arg-58 is mutually exclusive with methylation at Arg-60.

It localises to the nucleus. The protein resides in the chromosome. HMG-I/Y bind preferentially to the minor groove of A+T rich regions in double-stranded DNA. It is suggested that these proteins could function in nucleosome phasing and in the 3'-end processing of mRNA transcripts. They are also involved in the transcription regulation of genes containing, or in close proximity to A+T-rich regions. In Mus musculus (Mouse), this protein is High mobility group protein HMG-I/HMG-Y (Hmga1).